Here is a 423-residue protein sequence, read N- to C-terminus: MAKTIQAIRGMNDCAPTESPLWQWIEAQVRNVLNSYGYSEVRMPIVESTPLFARAIGEVTDVVSKEMYTFWDNDEQLTLRPEGTAGCVRAAIEHGWIYNNEQRLWYIGPMFRHERPQKGRYRQFHQAGVEVFGIANPKIDAELIMLTYRLWKALGIDQYVTLQLNSIGSLEARANYRSALVGFLENHQDLMSDEEKDRLVKNPLRILDTKNPELQKVLDNAPKLLDYLDDESREHFEQLCSLLDAVGIQYEINPKLVRGLDYYNKTVFEWVTSALGAQGTVCGGGRYDGLVEQLGGHATPSIGFAMGLERLVLLVQEVNPNVPVKSAVDIYVVYQGEGTTLAAFELAEKVRSELPHLNTMLHCSGGNFKKQFKRADKSGATLALVIGESEVQNKQVVVKHLQGGADQQTLDLVNIIDYIQTQF.

It belongs to the class-II aminoacyl-tRNA synthetase family. As to quaternary structure, homodimer.

Its subcellular location is the cytoplasm. The enzyme catalyses tRNA(His) + L-histidine + ATP = L-histidyl-tRNA(His) + AMP + diphosphate + H(+). This Haemophilus influenzae (strain PittEE) protein is Histidine--tRNA ligase.